The chain runs to 78 residues: HssA/B-like protein 30 (78 aa).

The disordered stretch occupies residues 1-32; that stretch reads MTLFSSITSISKTNTSSKSSVNSLSGSSLSMG.

It belongs to the hssA/B family.

This Dictyostelium discoideum (Social amoeba) protein is HssA/B-like protein 30 (hssl30).